A 363-amino-acid polypeptide reads, in one-letter code: UDP-N-acetylenolpyruvoylglucosamine reductase (363 aa).

The FAD-binding PCMH-type domain maps to 25–201 (IGPVARRMLT…RSAPVRYREL (177 aa)). Arginine 168 is an active-site residue. Serine 249 functions as the Proton donor in the catalytic mechanism. Glutamate 352 is an active-site residue.

Belongs to the MurB family. Requires FAD as cofactor.

The protein localises to the cytoplasm. The enzyme catalyses UDP-N-acetyl-alpha-D-muramate + NADP(+) = UDP-N-acetyl-3-O-(1-carboxyvinyl)-alpha-D-glucosamine + NADPH + H(+). The protein operates within cell wall biogenesis; peptidoglycan biosynthesis. Functionally, cell wall formation. This Mycolicibacterium smegmatis (strain ATCC 700084 / mc(2)155) (Mycobacterium smegmatis) protein is UDP-N-acetylenolpyruvoylglucosamine reductase.